The primary structure comprises 540 residues: Probable protein kinase UbiB (540 aa).

The helical transmembrane segment at 24 to 44 (LLFEQPLLPWWLASLRLLMPW) threads the bilayer. The region spanning 126-494 (RFDVEPLASA…RRRQGDRWAL (369 aa)) is the Protein kinase domain. Residues 132 to 140 (LASASVAQV) and lysine 154 each bind ATP. The active-site Proton acceptor is the aspartate 289. The next 2 helical transmembrane spans lie at 496 to 516 (LLGA…AEAA) and 518 to 538 (LAAP…YLIV).

Belongs to the ABC1 family. UbiB subfamily.

It localises to the cell inner membrane. The protein operates within cofactor biosynthesis; ubiquinone biosynthesis [regulation]. Its function is as follows. Is probably a protein kinase regulator of UbiI activity which is involved in aerobic coenzyme Q (ubiquinone) biosynthesis. This is Probable protein kinase UbiB from Pseudomonas putida (strain GB-1).